The primary structure comprises 475 residues: Chemotaxis protein MotD (475 aa).

Disordered regions lie at residues 1–175, 195–243, and 408–475; these read MRPL…PVGG, LQPE…SEPD, and GDSA…HVYM. The segment covering 9–22 has biased composition (polar residues); it reads RTSAASRPAQSLSV. The span at 79–100 shows a compositional bias: low complexity; it reads ADVPASMADAASPDARPASERA. Residues 143 to 155 are compositionally biased toward basic and acidic residues; the sequence is HSRETVHALRDAI. The segment covering 408–417 has biased composition (gly residues); that stretch reads GDSASGGGGQ. Residues 427-449 show a composition bias toward basic and acidic residues; the sequence is EGRERAGDDGQGRQPRDGGRAAT.

Its subcellular location is the cytoplasm. Required for the rotation of the flagellar motor. Has a positive effect as flagellar rotation increases when an excess of motd is present. This is Chemotaxis protein MotD (motD) from Rhizobium meliloti (Ensifer meliloti).